Consider the following 578-residue polypeptide: Raftlin (578 aa).

A lipid anchor (N-myristoyl glycine) is attached at glycine 2. The S-palmitoyl cysteine moiety is linked to residue cysteine 3. Positions 169–184 (VNSAGSSAPVSTANST) are enriched in polar residues. Disordered regions lie at residues 169 to 271 (VNSA…VHEE), 449 to 525 (FSRE…PGGL), and 551 to 578 (CTGHSNPGEDARDGDAEEVRELGTVEEN). Phosphoserine is present on residues serine 183, serine 199, and serine 220. The span at 185–206 (EDARDAKNARGDHASLENEKPG) shows a compositional bias: basic and acidic residues. The segment covering 457–466 (RQMRKSKGKL) has biased composition (basic residues). The segment covering 467 to 485 (SARDKQQAEENEKNLEDQS) has biased composition (basic and acidic residues). Serine 505 bears the Phosphoserine mark. Basic and acidic residues-rich tracts occupy residues 506-518 (EEMKGPVQEDKGE) and 557-578 (PGEDARDGDAEEVRELGTVEEN).

Belongs to the raftlin family. Interacts with TLR4; the interaction occurs in response to lipopolysaccharide stimulation. Interacts with CLTC; the interaction occurs in response to pathogens. Interacts with AP2A1 and AP2B1. As to expression, expressed in B-cells (at protein level). Expressed in dendritic cells and macrophages.

It localises to the cell membrane. Its subcellular location is the cytoplasm. It is found in the membrane raft. The protein resides in the endosome. The protein localises to the early endosome. In terms of biological role, involved in protein trafficking via association with clathrin and AP2 complex. Upon bacterial lipopolysaccharide stimulation, mediates internalization of TLR4 to endosomes in dendritic cells and macrophages; and internalization of poly(I:C) to TLR3-positive endosomes in myeloid dendritic cells and epithelial cells; resulting in activation of TICAM1-mediated signaling and subsequent IFNB1 production. Involved in T-cell antigen receptor-mediated signaling by regulating tyrosine kinase LCK localization, T-cell dependent antibody production and cytokine secretion. May regulate B-cell antigen receptor-mediated signaling. May play a pivotal role in the formation and/or maintenance of lipid rafts. The chain is Raftlin (RFTN1) from Homo sapiens (Human).